The sequence spans 230 residues: MAQGLIEVERKFLPGPGTEERLQELGGTLEHRVTFRDTYYDTPELSLMQADHWLRRREDSGWELKCPGAAGVLGHHTEYKELTAEPTIVAQLCKVLGADGLGAGDVAAVLDPLGLQEVASFVTKRSAWKLVLLGTDEEEPQLKVDLGTADFGYAVGEVEALVHEEAEVPAALEKIHRLSSMLGVPAQETAPAKLIVYLQRFRPQNYQRLLEVNSSKQRPQATEDPDNCLG.

N-acetylalanine is present on alanine 2. The CYTH domain maps to 5–201; that stretch reads LIEVERKFLP…AKLIVYLQRF (197 aa). The Mg(2+) site is built by glutamate 7 and glutamate 9. Substrate-binding residues include lysine 11, arginine 55, arginine 57, lysine 65, and arginine 125. Mg(2+) contacts are provided by aspartate 145, glutamate 157, and glutamate 159. Glutamate 157 is a binding site for substrate. Lysine 193 is a binding site for substrate.

It belongs to the ThTPase family. As to quaternary structure, monomer. The cofactor is Mg(2+).

The protein resides in the cytoplasm. It catalyses the reaction thiamine triphosphate + H2O = thiamine diphosphate + phosphate + H(+). Its function is as follows. Hydrolase highly specific for thiamine triphosphate (ThTP). The polypeptide is Thiamine-triphosphatase (THTPA) (Macaca fascicularis (Crab-eating macaque)).